The sequence spans 157 residues: Crossover junction endodeoxyribonuclease RuvC (157 aa).

Active-site residues include Asp7, Glu67, and Asp139. Residues Asp7, Glu67, and Asp139 each coordinate Mg(2+).

This sequence belongs to the RuvC family. Homodimer which binds Holliday junction (HJ) DNA. The HJ becomes 2-fold symmetrical on binding to RuvC with unstacked arms; it has a different conformation from HJ DNA in complex with RuvA. In the full resolvosome a probable DNA-RuvA(4)-RuvB(12)-RuvC(2) complex forms which resolves the HJ. It depends on Mg(2+) as a cofactor.

It localises to the cytoplasm. It catalyses the reaction Endonucleolytic cleavage at a junction such as a reciprocal single-stranded crossover between two homologous DNA duplexes (Holliday junction).. Its function is as follows. The RuvA-RuvB-RuvC complex processes Holliday junction (HJ) DNA during genetic recombination and DNA repair. Endonuclease that resolves HJ intermediates. Cleaves cruciform DNA by making single-stranded nicks across the HJ at symmetrical positions within the homologous arms, yielding a 5'-phosphate and a 3'-hydroxyl group; requires a central core of homology in the junction. The consensus cleavage sequence is 5'-(A/T)TT(C/G)-3'. Cleavage occurs on the 3'-side of the TT dinucleotide at the point of strand exchange. HJ branch migration catalyzed by RuvA-RuvB allows RuvC to scan DNA until it finds its consensus sequence, where it cleaves and resolves the cruciform DNA. This chain is Crossover junction endodeoxyribonuclease RuvC, found in Prochlorococcus marinus subsp. pastoris (strain CCMP1986 / NIES-2087 / MED4).